A 376-amino-acid chain; its full sequence is Arginine/serine-rich coiled-coil protein 2 (376 aa).

The disordered stretch occupies residues 1-171 (MIRTNFLLKQ…PSPPPFRGRN (171 aa)). Residues 13 to 52 (RHESKDKSSKRHKSEEHNDKEHSSDKGRERLNSSENGEDR) show a composition bias toward basic and acidic residues. Residue S45 is modified to Phosphoserine. Basic residues predominate over residues 53–155 (HKRKERKSSR…KRIEKPRRFS (103 aa)). Residues 171–214 (NTAMDAQEALARRLERAKKLQEQREKEMVEKQKQQEMAAAAAAT) are a coiled coil. K317 participates in a covalent cross-link: Glycyl lysine isopeptide (Lys-Gly) (interchain with G-Cter in SUMO1); alternate. K317 participates in a covalent cross-link: Glycyl lysine isopeptide (Lys-Gly) (interchain with G-Cter in SUMO2); alternate. The residue at position 318 (S318) is a Phosphoserine.

This sequence belongs to the RSRC2 family.

The sequence is that of Arginine/serine-rich coiled-coil protein 2 (Rsrc2) from Rattus norvegicus (Rat).